The primary structure comprises 456 residues: MENKPSVLTERYEVGRLLGQGTFAKVYFGRSNHTNESVAIKMIDKDKVMRVGLSQQIKREISVMRIAKHPNVVELYEVMATKSRIYFVIEYCKGGELFNKVAKGKLKEDVAWKYFYQLISAVDFCHSRGVYHRDIKPENLLLDDNDNLKVSDFGLSALADCKRQDGLLHTTCGTPAYVAPEVINRKGYEGTKADIWSCGVVLFVLLAGYLPFHDTNLMEMYRKIGKADFKCPSWFAPEVKRLLCKMLDPNHETRITIAKIKESSWFRKGLHLKQKKMEKMEKQQVREATNPMEAGGSGQNENGENHEPPRLATLNAFDIIALSTGFGLAGLFGDVYDKRESRFASQKPASEIISKLVEVAKCLKLKIRKQGAGLFKLERVKEGKNGILTMDAEIFQVTPTFHLVEVKKCNGDTMEYQKLVEEDLRPALADIVWVWQGEKEKEEQLLQDEQGEQEPS.

Residues 12-266 (YEVGRLLGQG…IAKIKESSWF (255 aa)) enclose the Protein kinase domain. ATP contacts are provided by residues 18–26 (LGQGTFAKV) and K41. D134 functions as the Proton acceptor in the catalytic mechanism. Residues 152–181 (DFGLSALADCKRQDGLLHTTCGTPAYVAPE) are activation loop. Phosphoserine is present on S156. T170 carries the post-translational modification Phosphothreonine. Positions 280-309 (MEKQQVREATNPMEAGGSGQNENGENHEPP) are disordered. Residues 309-333 (PRLATLNAFDIIALSTGFGLAGLFG) form the NAF domain. The segment at 338–367 (KRESRFASQKPASEIISKLVEVAKCLKLKI) is PPI.

The protein belongs to the protein kinase superfamily. CAMK Ser/Thr protein kinase family. SNF1 subfamily. As to quaternary structure, interacts with CBL2, CBL3 and CBL5. Requires Mn(2+) as cofactor.

The catalysed reaction is L-seryl-[protein] + ATP = O-phospho-L-seryl-[protein] + ADP + H(+). It carries out the reaction L-threonyl-[protein] + ATP = O-phospho-L-threonyl-[protein] + ADP + H(+). CIPK serine-threonine protein kinases interact with CBL proteins. Binding of a CBL protein to the regulatory NAF domain of CIPK protein lead to the activation of the kinase in a calcium-dependent manner. This Arabidopsis thaliana (Mouse-ear cress) protein is CBL-interacting serine/threonine-protein kinase 2 (CIPK2).